Here is a 1414-residue protein sequence, read N- to C-terminus: DNA-directed RNA polymerase subunit beta' (1414 aa).

Positions 70, 72, 85, and 88 each coordinate Zn(2+). 3 residues coordinate Mg(2+): aspartate 460, aspartate 462, and aspartate 464. Zn(2+) contacts are provided by cysteine 819, cysteine 893, cysteine 900, and cysteine 903. Residues 1391-1414 are disordered; the sequence is AEEAFDFGTPSAPAEEPQQHPAAE. The segment covering 1400–1414 has biased composition (low complexity); it reads PSAPAEEPQQHPAAE.

The protein belongs to the RNA polymerase beta' chain family. As to quaternary structure, the RNAP catalytic core consists of 2 alpha, 1 beta, 1 beta' and 1 omega subunit. When a sigma factor is associated with the core the holoenzyme is formed, which can initiate transcription. Mg(2+) serves as cofactor. Zn(2+) is required as a cofactor.

It carries out the reaction RNA(n) + a ribonucleoside 5'-triphosphate = RNA(n+1) + diphosphate. DNA-dependent RNA polymerase catalyzes the transcription of DNA into RNA using the four ribonucleoside triphosphates as substrates. The chain is DNA-directed RNA polymerase subunit beta' from Burkholderia lata (strain ATCC 17760 / DSM 23089 / LMG 22485 / NCIMB 9086 / R18194 / 383).